Here is a 128-residue protein sequence, read N- to C-terminus: Large ribosomal subunit protein bL20 (128 aa).

Belongs to the bacterial ribosomal protein bL20 family.

Its function is as follows. Binds directly to 23S ribosomal RNA and is necessary for the in vitro assembly process of the 50S ribosomal subunit. It is not involved in the protein synthesizing functions of that subunit. The protein is Large ribosomal subunit protein bL20 of Kocuria rhizophila (strain ATCC 9341 / DSM 348 / NBRC 103217 / DC2201).